Reading from the N-terminus, the 266-residue chain is Segregation and condensation protein A (266 aa).

The protein belongs to the ScpA family. As to quaternary structure, component of a cohesin-like complex composed of ScpA, ScpB and the Smc homodimer, in which ScpA and ScpB bind to the head domain of Smc. The presence of the three proteins is required for the association of the complex with DNA.

The protein resides in the cytoplasm. Functionally, participates in chromosomal partition during cell division. May act via the formation of a condensin-like complex containing Smc and ScpB that pull DNA away from mid-cell into both cell halves. The chain is Segregation and condensation protein A from Coxiella burnetii (strain RSA 493 / Nine Mile phase I).